The primary structure comprises 770 residues: Signal transducer and activator of transcription 3 (770 aa).

Position 2 is an N-acetylalanine (A2). K49 and K87 each carry N6-acetyllysine. Positions D150–M162 match the Essential for nuclear import motif. Residues W580 to L670 enclose the SH2 domain. K601, K615, and K631 each carry allysine; alternate. N6-acetyllysine; alternate is present on residues K601, K615, and K631. Y640 bears the Phosphotyrosine; by TYK2 mark. Position 685 is an allysine; alternate (K685). Residue K685 is modified to N6-acetyllysine; alternate. Y705 is modified (phosphotyrosine; by FER and PTK6). K707 is modified (N6-acetyllysine). T714 carries the post-translational modification Phosphothreonine. Position 727 is a phosphoserine; by DYRK2, NLK, NEK6, IRAK1, RPS6KA5, ZIPK/DAPK3 and PKC/PRKCE (S727).

Belongs to the transcription factor STAT family. Forms a homodimer or a heterodimer with a related family member (at least STAT1). Component of a promoter-binding complex composed of STAT3, NFATC3 and NFATC4; complex formation is enhanced by calcineurin. Interacts with IL31RA, NCOA1, PELP1, SIPAR, SOCS7, STATIP1 and TMF1. Interacts with IL23R in presence of IL23. Interacts (via SH2 domain) with NLK. Interacts with ARL2BP; the interaction is enhanced by LIF and JAK1 expression. Interacts with KPNA4 and KPNA5; KPNA4 may be the primary mediator of nuclear import. Interacts with CAV2; the interaction is increased on insulin-induced tyrosine phosphorylation of CAV2 and leads to STAT3 activation. Interacts with ARL2BP; interaction is enhanced with ARL2. Interacts with NEK6. Binds to CDK9 when activated and nuclear. Interacts with BMX. Interacts with ZIPK/DAPK3. Interacts with PIAS3; the interaction occurs on stimulation by IL6, CNTF or OSM and inhibits the DNA binding activity of STAT3. In prostate cancer cells, interacts with PRKCE and promotes DNA binding activity of STAT3. Interacts with STMN3, antagonizing its microtubule-destabilizing activity. Interacts with the 'Lys-129' acetylated form of BIRC5/survivin. Interacts with FER. Interacts (via SH2 domain) with EIF2AK2/PKR (via the kinase catalytic domain). Interacts with FGFR4. Interacts with INPP5F; the interaction is independent of STAT3 Tyr-705 phosphorylation status. Interacts with OCIAD1 and OCIAD2. Interacts (unphosphorylated or phosphorylated at Ser-727) with PHB1. Interacts and may form heterodimers with NHLH1. Found in a complex with SLC39A6, SLC39A10 and with the 'Ser-727' phosphorylated form of STAT3 throughout mitosis. Interacts (when acetylated) with EP300 (via bromo domain); interaction takes place following STAT3 acetylation by EP300 and promotes enhanceosome assembly. Interacts (when acetylated) with BRD2 (via bromo domain); interaction promotes STAT3 recruitment to chromatin and T-helper Th17 cell differentiation. Interacts with FAM220A/SIPAR; the interaction occurs in both the nucleus and the cytoplasm, is enhanced by IL6 and promotes STAT3 dephosphorylation. Interacts in both unphosphorylated and phosphorylated forms with FAM220A but interacts preferentially in the phosphorylated form in the nucleus. Interacts with PTPN2; the interaction is promoted by FAM220A and leads to STAT3 dephosphorylation which negatively regulates STAT3 transcriptional activator activity. Post-translationally, activated through tyrosine phosphorylation by BMX. Tyrosine phosphorylated in response to IL-6, IL-11, CNTF, LIF, CSF-1, EGF, PDGF, IFN-alpha and OSM. Tyrosine phosphorylated in response to constitutively activated FGFR1, FGFR2, FGFR3 and FGFR4. Phosphorylated on serine upon DNA damage, probably by ATM or ATR. Serine phosphorylation is important for the formation of stable DNA-binding STAT3 homodimers and maximal transcriptional activity. ARL2BP may participate in keeping the phosphorylated state of STAT3 within the nucleus. Tyrosine phosphorylated upon stimulation with EGF. Upon LPS challenge, phosphorylated within the nucleus by IRAK1. Phosphorylated on Ser-727 by RPS6KA5. Dephosphorylation on tyrosine residues by PTPN2 negatively regulates IL6/interleukin-6 signaling. Phosphorylation at Tyr-705 by FER, isoform M2 of PKM (PKM2) or PTK6 leads to an increase of its transcriptional activity. Phosphorylation at Tyr-705 is increased in the presence of calcineurin. Phosphorylation at Tyr-640 by TYK2 negatively regulates transcriptional activity. In terms of processing, acetylated on lysine residues by EP300/p300, promoting its activation. Acetylation at Lys-49 and Lys-87 by EP300/p300 promotes its activation. Acetylation at Lys-87 by EP300/p300 promotes its association with BRD2 and recruitment to chromatin. Deacetylated at Lys-49 and Lys-87 by HDAC1. Acetylation at Lys-685 by EP300/p300 promotes its homodimerization and activation. Deacetylated at Lys-685 by HDAC3. Acetylated on lysine residues by CREBBP. Deacetylation by LOXL3 leads to disrupt STAT3 dimerization and inhibit STAT3 transcription activity. Oxidation of lysine residues to allysine on STAT3 preferentially takes place on lysine residues that are acetylated. Some lysine residues are oxidized to allysine by LOXL3, leading to disrupt STAT3 dimerization and inhibit STAT3 transcription activity. Oxidation of lysine residues to allysine on STAT3 preferentially takes place on lysine residues that are acetylated.

The protein localises to the cytoplasm. It is found in the nucleus. In terms of biological role, signal transducer and transcription activator that mediates cellular responses to interleukins, KITLG/SCF, LEP and other growth factors. Once activated, recruits coactivators, such as NCOA1 or MED1, to the promoter region of the target gene. May mediate cellular responses to activated FGFR1, FGFR2, FGFR3 and FGFR4. Upon activation of IL6ST/gp130 signaling by interleukin-6 (IL6), binds to the IL6-responsive elements identified in the promoters of various acute-phase protein genes. Activated by IL31 through IL31RA. Acts as a regulator of inflammatory response by regulating differentiation of naive CD4(+) T-cells into T-helper Th17 or regulatory T-cells (Treg): acetylation promotes its transcription activity and cell differentiation while deacetylation and oxidation of lysine residues by LOXL3 inhibits differentiation. Involved in cell cycle regulation by inducing the expression of key genes for the progression from G1 to S phase, such as CCND1. Mediates the effects of LEP on melanocortin production, body energy homeostasis and lactation. May play an apoptotic role by transctivating BIRC5 expression under LEP activation. Cytoplasmic STAT3 represses macroautophagy by inhibiting EIF2AK2/PKR activity. Plays a crucial role in basal beta cell functions, such as regulation of insulin secretion. Following JAK/STAT signaling activation and as part of a complex with NFATC3 and NFATC4, binds to the alpha-beta E4 promoter region of CRYAB and activates transcription in cardiomyocytes. Plays an important role in host defense in methicillin-resistant S.aureus lung infection by regulating the expression of the antimicrobial lectin REG3G. The chain is Signal transducer and activator of transcription 3 (STAT3) from Bos taurus (Bovine).